The chain runs to 133 residues: Crossover junction endodeoxyribonuclease Hjc (133 aa).

Glu-12 contributes to the Mg(2+) binding site. Ser-32 is an active-site residue. Mg(2+)-binding residues include Asp-36 and Glu-49.

The protein belongs to the Holliday junction resolvase Hjc family. In terms of assembly, homodimer. Mg(2+) is required as a cofactor.

The enzyme catalyses Endonucleolytic cleavage at a junction such as a reciprocal single-stranded crossover between two homologous DNA duplexes (Holliday junction).. Its function is as follows. A structure-specific endonuclease that resolves Holliday junction (HJ) intermediates during genetic recombination. Cleaves 4-way DNA junctions introducing paired nicks in opposing strands, leaving a 5'-terminal phosphate and a 3'-terminal hydroxyl group that are subsequently ligated to produce recombinant products. This chain is Crossover junction endodeoxyribonuclease Hjc, found in Methanocaldococcus jannaschii (strain ATCC 43067 / DSM 2661 / JAL-1 / JCM 10045 / NBRC 100440) (Methanococcus jannaschii).